The following is a 143-amino-acid chain: Transcriptional regulator MraZ (143 aa).

SpoVT-AbrB domains lie at 6 to 49 and 78 to 121; these read TYNH…NEAE and SDET…DLKV.

This sequence belongs to the MraZ family. Forms oligomers.

The protein resides in the cytoplasm. Its subcellular location is the nucleoid. This is Transcriptional regulator MraZ from Spiroplasma kunkelii.